The following is a 358-amino-acid chain: Methionine import ATP-binding protein MetN (358 aa).

The ABC transporter domain maps to 2–247; it reads ITTTGLTKVY…PGSELAHELF (246 aa). Residue 38 to 45 coordinates ATP; the sequence is GQSGAGKS.

Belongs to the ABC transporter superfamily. Methionine importer (TC 3.A.1.24) family. As to quaternary structure, the complex is composed of two ATP-binding proteins (MetN), two transmembrane proteins (MetI) and a solute-binding protein (MetQ).

It is found in the cell membrane. It catalyses the reaction L-methionine(out) + ATP + H2O = L-methionine(in) + ADP + phosphate + H(+). The enzyme catalyses D-methionine(out) + ATP + H2O = D-methionine(in) + ADP + phosphate + H(+). Its function is as follows. Part of the ABC transporter complex MetNIQ involved in methionine import. Responsible for energy coupling to the transport system. In Streptomyces griseus, this protein is Methionine import ATP-binding protein MetN.